The primary structure comprises 237 residues: Glutathione-independent glyoxalase HSP31 (237 aa).

Active-site residues include C138, H139, and E170. C138 is modified (cysteine sulfinic acid (-SO2H)).

This sequence belongs to the peptidase C56 family. HSP31-like subfamily. As to quaternary structure, homodimer. In terms of processing, cys-138 is easily oxidized to sulfinic acid.

It is found in the cytoplasm. Its subcellular location is the P-body. The enzyme catalyses methylglyoxal + H2O = (R)-lactate + H(+). In terms of biological role, catalyzes the conversion of methylglyoxal (MG) to D-lactate in a single glutathione (GSH)-independent step. May play a role in detoxifying endogenously produced glyoxals. Involved in protection against reactive oxygen species (ROS). Important for viability in stationary phase. May negatively regulate TORC1 in response to nutrient limitation. The chain is Glutathione-independent glyoxalase HSP31 from Saccharomyces cerevisiae (strain ATCC 204508 / S288c) (Baker's yeast).